Here is a 397-residue protein sequence, read N- to C-terminus: Succinate--CoA ligase [ADP-forming] subunit beta (397 aa).

Residues 9-254 (KALLKGYGAP…ETEEDAKEIE (246 aa)) enclose the ATP-grasp domain. ATP-binding positions include K46, 53–55 (GRG), E109, A112, and E117. Residues N209 and D223 each coordinate Mg(2+). Substrate contacts are provided by residues N274 and 331 to 333 (GIM).

This sequence belongs to the succinate/malate CoA ligase beta subunit family. As to quaternary structure, heterotetramer of two alpha and two beta subunits. It depends on Mg(2+) as a cofactor.

It catalyses the reaction succinate + ATP + CoA = succinyl-CoA + ADP + phosphate. The enzyme catalyses GTP + succinate + CoA = succinyl-CoA + GDP + phosphate. It participates in carbohydrate metabolism; tricarboxylic acid cycle; succinate from succinyl-CoA (ligase route): step 1/1. In terms of biological role, succinyl-CoA synthetase functions in the citric acid cycle (TCA), coupling the hydrolysis of succinyl-CoA to the synthesis of either ATP or GTP and thus represents the only step of substrate-level phosphorylation in the TCA. The beta subunit provides nucleotide specificity of the enzyme and binds the substrate succinate, while the binding sites for coenzyme A and phosphate are found in the alpha subunit. This is Succinate--CoA ligase [ADP-forming] subunit beta from Rhizobium johnstonii (strain DSM 114642 / LMG 32736 / 3841) (Rhizobium leguminosarum bv. viciae).